Reading from the N-terminus, the 375-residue chain is Xylose transport system permease protein XylH (375 aa).

10 helical membrane-spanning segments follow: residues Leu-9–Thr-29, Leu-52–Leu-72, Val-85–Phe-105, Val-118–Leu-138, Leu-159–Gly-179, Asp-199–Asp-219, Tyr-220–Leu-240, Lys-271–Ala-291, Leu-319–Leu-339, and Val-348–Asp-368.

The protein belongs to the binding-protein-dependent transport system permease family. AraH/RbsC subfamily.

Its subcellular location is the cell inner membrane. Its function is as follows. Part of the binding-protein-dependent transport system for D-xylose. Probably responsible for the translocation of the substrate across the membrane. This Haemophilus influenzae (strain ATCC 51907 / DSM 11121 / KW20 / Rd) protein is Xylose transport system permease protein XylH (xylH).